The primary structure comprises 110 residues: Large ribosomal subunit protein uL22 (110 aa).

This sequence belongs to the universal ribosomal protein uL22 family. In terms of assembly, part of the 50S ribosomal subunit.

Functionally, this protein binds specifically to 23S rRNA; its binding is stimulated by other ribosomal proteins, e.g. L4, L17, and L20. It is important during the early stages of 50S assembly. It makes multiple contacts with different domains of the 23S rRNA in the assembled 50S subunit and ribosome. The globular domain of the protein is located near the polypeptide exit tunnel on the outside of the subunit, while an extended beta-hairpin is found that lines the wall of the exit tunnel in the center of the 70S ribosome. The protein is Large ribosomal subunit protein uL22 of Variovorax paradoxus (strain S110).